The primary structure comprises 166 residues: Large ribosomal subunit protein uL10 (166 aa).

The protein belongs to the universal ribosomal protein uL10 family. As to quaternary structure, part of the ribosomal stalk of the 50S ribosomal subunit. The N-terminus interacts with L11 and the large rRNA to form the base of the stalk. The C-terminus forms an elongated spine to which L12 dimers bind in a sequential fashion forming a multimeric L10(L12)X complex.

In terms of biological role, forms part of the ribosomal stalk, playing a central role in the interaction of the ribosome with GTP-bound translation factors. The chain is Large ribosomal subunit protein uL10 from Streptococcus uberis (strain ATCC BAA-854 / 0140J).